The primary structure comprises 458 residues: F-box/WD repeat-containing protein 9 (458 aa).

Methionine 1 bears the N-acetylmethionine mark. Positions 1–28 are disordered; that stretch reads MELPPGPRDDPHAWDDDSDPELEPDTDA. Over residues 16 to 28 the composition is skewed to acidic residues; it reads DDSDPELEPDTDA. Phosphoserine is present on residues serine 18 and serine 59. One can recognise an F-box domain in the interval 76–123; sequence VPGLLSLPPELLLEICAYLDARLVLHVLPRVCHALRDLVRDRVTWRLR. WD repeat units lie at residues 171–210, 224–261, 264–301, 305–342, 344–381, 387–424, and 427–458; these read GHFASIDSVLLLQGGTLCLSGSRDRNVNLWDLQQLGVEPS, THKGWVWSLAALDHRVCSGSWDSTVKLWDMAADGQQFG, KGKAAVLCLSYRPDILVTGTYDKKVTVYDPRVGPALLK, LHSSAVLALLADDRHIISGSEDHTLVVFDRRANSVLQR, QLDSYLLCMSYQEPQLWAGDNQGLLHVFANRSGCFQLV, GHRSQITGIKHSLGALYTTSTDKTIRVHVPTDPPRTIC, and SHHNVLNGICAEGNLVVAASGGLSLEVWRLQA.

As to quaternary structure, interacts with SKP1 and CUL1.

Substrate-recognition component of the SCF (SKP1-CUL1-F-box protein)-type E3 ubiquitin ligase complex. In Bos taurus (Bovine), this protein is F-box/WD repeat-containing protein 9 (FBXW9).